A 251-amino-acid chain; its full sequence is Probable transcriptional regulatory protein DehaBAV1_0421 (251 aa).

The protein belongs to the TACO1 family.

It localises to the cytoplasm. The polypeptide is Probable transcriptional regulatory protein DehaBAV1_0421 (Dehalococcoides mccartyi (strain ATCC BAA-2100 / JCM 16839 / KCTC 5957 / BAV1)).